The chain runs to 481 residues: Probable glycine dehydrogenase (decarboxylating) subunit 2 (481 aa).

The disordered stretch occupies residues 1–23 (MVIFEKTRGKNSPSVMPSKKGDV). Position 263 is an N6-(pyridoxal phosphate)lysine (K263).

It belongs to the GcvP family. C-terminal subunit subfamily. As to quaternary structure, the glycine cleavage system is composed of four proteins: P, T, L and H. In this organism, the P 'protein' is a heterodimer of two subunits. Pyridoxal 5'-phosphate serves as cofactor.

It carries out the reaction N(6)-[(R)-lipoyl]-L-lysyl-[glycine-cleavage complex H protein] + glycine + H(+) = N(6)-[(R)-S(8)-aminomethyldihydrolipoyl]-L-lysyl-[glycine-cleavage complex H protein] + CO2. The glycine cleavage system catalyzes the degradation of glycine. The P protein binds the alpha-amino group of glycine through its pyridoxal phosphate cofactor; CO(2) is released and the remaining methylamine moiety is then transferred to the lipoamide cofactor of the H protein. This is Probable glycine dehydrogenase (decarboxylating) subunit 2 from Francisella philomiragia subsp. philomiragia (strain ATCC 25017 / CCUG 19701 / FSC 153 / O#319-036).